The following is a 643-amino-acid chain: Lysophospholipase ARB_05919 (643 aa).

The signal sequence occupies residues 1 to 22; sequence MMFIPATLGTFVLASLLPATVG. The region spanning 50 to 597 is the PLA2c domain; sequence DCPSTKPAVR…KMYCWDGTLN (548 aa). Residues asparagine 142, asparagine 176, asparagine 195, asparagine 293, asparagine 466, asparagine 472, asparagine 482, asparagine 503, asparagine 524, asparagine 533, asparagine 552, and asparagine 597 are each glycosylated (N-linked (GlcNAc...) asparagine).

It belongs to the lysophospholipase family.

The protein localises to the secreted. The catalysed reaction is a 1-acyl-sn-glycero-3-phosphocholine + H2O = sn-glycerol 3-phosphocholine + a fatty acid + H(+). Its function is as follows. Catalyzes the release of fatty acids from lysophospholipids. Phospholipase B may well contribute to pathogenicity by abetting the fungus in damaging host cell membranes. In Arthroderma benhamiae (strain ATCC MYA-4681 / CBS 112371) (Trichophyton mentagrophytes), this protein is Lysophospholipase ARB_05919.